Consider the following 473-residue polypeptide: Glutamyl-tRNA reductase (473 aa).

Substrate is bound by residues 49–52 (TCNR), Ser109, 114–116 (EHQ), and Gln120. The active-site Nucleophile is the Cys50. 189–194 (GAGAMA) lines the NADP(+) pocket. The interval 422 to 473 (VAISAPQPSTDSPARAAYQPTDEAATDAEPRRDDAEPPSAAAAQDAGRESRP) is disordered.

The protein belongs to the glutamyl-tRNA reductase family. As to quaternary structure, homodimer.

The enzyme catalyses (S)-4-amino-5-oxopentanoate + tRNA(Glu) + NADP(+) = L-glutamyl-tRNA(Glu) + NADPH + H(+). The protein operates within porphyrin-containing compound metabolism; protoporphyrin-IX biosynthesis; 5-aminolevulinate from L-glutamyl-tRNA(Glu): step 1/2. Functionally, catalyzes the NADPH-dependent reduction of glutamyl-tRNA(Glu) to glutamate 1-semialdehyde (GSA). The chain is Glutamyl-tRNA reductase from Acidothermus cellulolyticus (strain ATCC 43068 / DSM 8971 / 11B).